We begin with the raw amino-acid sequence, 227 residues long: Cytochrome c oxidase subunit 2 (227 aa).

Residues 1–14 are Mitochondrial intermembrane-facing; that stretch reads MAYPFQLGFQDATS. A helical membrane pass occupies residues 15–45; the sequence is PIMEELLHFHDHTLMIVFLISSLVLYVISAM. At 46–59 the chain is on the mitochondrial matrix side; that stretch reads LTTNLTHTSTMDAQ. The helical transmembrane segment at 60–87 threads the bilayer; the sequence is EVETIWTILPAIILITIALPSLRILYMM. Residues 88-227 lie on the Mitochondrial intermembrane side of the membrane; that stretch reads DEINNPAMTI…YFEKWSVSML (140 aa). Histidine 161, cysteine 196, glutamate 198, cysteine 200, histidine 204, and methionine 207 together coordinate Cu cation. Glutamate 198 is a Mg(2+) binding site. Tyrosine 218 is modified (phosphotyrosine).

Belongs to the cytochrome c oxidase subunit 2 family. As to quaternary structure, component of the cytochrome c oxidase (complex IV, CIV), a multisubunit enzyme composed of 14 subunits. The complex is composed of a catalytic core of 3 subunits MT-CO1, MT-CO2 and MT-CO3, encoded in the mitochondrial DNA, and 11 supernumerary subunits COX4I, COX5A, COX5B, COX6A, COX6B, COX6C, COX7A, COX7B, COX7C, COX8 and NDUFA4, which are encoded in the nuclear genome. The complex exists as a monomer or a dimer and forms supercomplexes (SCs) in the inner mitochondrial membrane with NADH-ubiquinone oxidoreductase (complex I, CI) and ubiquinol-cytochrome c oxidoreductase (cytochrome b-c1 complex, complex III, CIII), resulting in different assemblies (supercomplex SCI(1)III(2)IV(1) and megacomplex MCI(2)III(2)IV(2)). Found in a complex with TMEM177, COA6, COX18, COX20, SCO1 and SCO2. Interacts with TMEM177 in a COX20-dependent manner. Interacts with COX20. Interacts with COX16. Cu cation is required as a cofactor.

Its subcellular location is the mitochondrion inner membrane. The catalysed reaction is 4 Fe(II)-[cytochrome c] + O2 + 8 H(+)(in) = 4 Fe(III)-[cytochrome c] + 2 H2O + 4 H(+)(out). Component of the cytochrome c oxidase, the last enzyme in the mitochondrial electron transport chain which drives oxidative phosphorylation. The respiratory chain contains 3 multisubunit complexes succinate dehydrogenase (complex II, CII), ubiquinol-cytochrome c oxidoreductase (cytochrome b-c1 complex, complex III, CIII) and cytochrome c oxidase (complex IV, CIV), that cooperate to transfer electrons derived from NADH and succinate to molecular oxygen, creating an electrochemical gradient over the inner membrane that drives transmembrane transport and the ATP synthase. Cytochrome c oxidase is the component of the respiratory chain that catalyzes the reduction of oxygen to water. Electrons originating from reduced cytochrome c in the intermembrane space (IMS) are transferred via the dinuclear copper A center (CU(A)) of subunit 2 and heme A of subunit 1 to the active site in subunit 1, a binuclear center (BNC) formed by heme A3 and copper B (CU(B)). The BNC reduces molecular oxygen to 2 water molecules using 4 electrons from cytochrome c in the IMS and 4 protons from the mitochondrial matrix. This chain is Cytochrome c oxidase subunit 2 (MT-CO2), found in Macrotus californicus (Californian leaf-nosed bat).